The following is a 236-amino-acid chain: Ureidoacrylate amidohydrolase RutB (236 aa).

Catalysis depends on aspartate 24, which acts as the Proton acceptor. Lysine 133 is a catalytic residue. The active-site Nucleophile is the cysteine 166.

Belongs to the isochorismatase family. RutB subfamily.

The enzyme catalyses (Z)-3-ureidoacrylate + H2O + H(+) = (Z)-3-aminoacrylate + NH4(+) + CO2. The catalysed reaction is (Z)-3-ureidoacrylate + H2O = (Z)-3-aminoacrylate + carbamate + H(+). It carries out the reaction (Z)-2-methylureidoacrylate + H2O + H(+) = (Z)-2-methylaminoacrylate + NH4(+) + CO2. In terms of biological role, hydrolyzes ureidoacrylate to form aminoacrylate and carbamate. The carbamate hydrolyzes spontaneously, thereby releasing one of the nitrogen atoms of the pyrimidine ring as ammonia and one of its carbon atoms as CO2. This is Ureidoacrylate amidohydrolase RutB from Klebsiella pneumoniae (strain 342).